A 142-amino-acid chain; its full sequence is COA8 family protein Y39B6A.34, mitochondrial (142 aa).

This sequence belongs to the COA8 family.

The protein resides in the mitochondrion inner membrane. In terms of biological role, may be required for cytochrome c complex (COX) assembly and function, COX being the terminal component of the mitochondrial respiratory chain. This is COA8 family protein Y39B6A.34, mitochondrial from Caenorhabditis elegans.